Reading from the N-terminus, the 37-residue chain is Large ribosomal subunit protein bL36 (37 aa).

The protein belongs to the bacterial ribosomal protein bL36 family.

This chain is Large ribosomal subunit protein bL36, found in Campylobacter jejuni subsp. jejuni serotype O:6 (strain 81116 / NCTC 11828).